A 366-amino-acid polypeptide reads, in one-letter code: tRNA/tmRNA (uracil-C(5))-methyltransferase (366 aa).

5 residues coordinate S-adenosyl-L-methionine: Gln190, Tyr218, Asn223, Glu239, and Asp299. Residue Cys324 is the Nucleophile of the active site. Glu358 acts as the Proton acceptor in catalysis.

It belongs to the class I-like SAM-binding methyltransferase superfamily. RNA M5U methyltransferase family. TrmA subfamily.

The enzyme catalyses uridine(54) in tRNA + S-adenosyl-L-methionine = 5-methyluridine(54) in tRNA + S-adenosyl-L-homocysteine + H(+). The catalysed reaction is uridine(341) in tmRNA + S-adenosyl-L-methionine = 5-methyluridine(341) in tmRNA + S-adenosyl-L-homocysteine + H(+). Functionally, dual-specificity methyltransferase that catalyzes the formation of 5-methyluridine at position 54 (m5U54) in all tRNAs, and that of position 341 (m5U341) in tmRNA (transfer-mRNA). The sequence is that of tRNA/tmRNA (uracil-C(5))-methyltransferase from Escherichia coli (strain ATCC 8739 / DSM 1576 / NBRC 3972 / NCIMB 8545 / WDCM 00012 / Crooks).